The sequence spans 776 residues: Calcium-independent phospholipase A2-gamma (776 aa).

Basic and acidic residues-rich tracts occupy residues R226–K238 and L307–D331. 2 disordered regions span residues R226 to P274 and K306 to D331. In terms of domain architecture, PNPLA spans L439 to L634. The GXGXXG motif lies at G443–G448. Residues L469–F489 traverse the membrane as a helical segment. The GXSXG signature appears at G475–G479. The Nucleophile role is filled by S477. The active-site Proton acceptor is D621. Residues D621–G623 carry the DGA/G motif. Position 730 is an N6-succinyllysine (K730).

The protein resides in the endoplasmic reticulum membrane. Its subcellular location is the microsome membrane. It is found in the mitochondrion membrane. The protein localises to the peroxisome membrane. The enzyme catalyses a 1,2-diacyl-sn-glycero-3-phosphocholine + H2O = a 1-acyl-sn-glycero-3-phosphocholine + a fatty acid + H(+). It catalyses the reaction a 1,2-diacyl-sn-glycero-3-phosphocholine + H2O = a 2-acyl-sn-glycero-3-phosphocholine + a fatty acid + H(+). It carries out the reaction a 1,2-diacyl-sn-glycero-3-phosphoethanolamine + H2O = a 1-acyl-sn-glycero-3-phosphoethanolamine + a fatty acid + H(+). The catalysed reaction is a 1-O-(1Z-alkenyl)-2-acyl-sn-glycero-3-phosphocholine + H2O = a 1-O-(1Z-alkenyl)-sn-glycero-3-phosphocholine + a fatty acid + H(+). The enzyme catalyses a 1-acyl-sn-glycero-3-phosphocholine + H2O = sn-glycerol 3-phosphocholine + a fatty acid + H(+). It catalyses the reaction 1-acyl-2-(9Z,12Z)-octadecadienoyl-sn-glycero-3-phosphocholine + H2O = a 1-acyl-sn-glycero-3-phosphocholine + (9Z,12Z)-octadecadienoate + H(+). It carries out the reaction 1-acyl-2-(5Z,8Z,11Z,14Z-eicosatetraenoyl)-sn-glycero-3-phosphocholine + H2O = a 1-acyl-sn-glycero-3-phosphocholine + (5Z,8Z,11Z,14Z)-eicosatetraenoate + H(+). The catalysed reaction is 1-hexadecanoyl-2-(5Z,8Z,11Z,14Z-eicosatetraenoyl)-sn-glycero-3-phosphocholine + H2O = 1-hexadecanoyl-sn-glycero-3-phosphocholine + (5Z,8Z,11Z,14Z)-eicosatetraenoate + H(+). The enzyme catalyses 1-octadecanoyl-2-(9Z-octadecenoyl)-sn-glycero-3-phosphocholine + H2O = 1-octadecanoyl-sn-glycero-3-phosphocholine + (9Z)-octadecenoate + H(+). It catalyses the reaction 1-hexadecanoyl-2-(9Z-octadecenoyl)-sn-glycero-3-phosphocholine + H2O = 1-hexadecanoyl-sn-glycero-3-phosphocholine + (9Z)-octadecenoate + H(+). It carries out the reaction 1-hexadecanoyl-2-(9Z,12Z-octadecadienoyl)-sn-glycero-3-phosphocholine + H2O = (9Z,12Z)-octadecadienoate + 1-hexadecanoyl-sn-glycero-3-phosphocholine + H(+). The catalysed reaction is 1-acyl-2-(9Z,12Z)-octadecadienoyl-sn-glycero-3-phosphoethanolamine + H2O = a 1-acyl-sn-glycero-3-phosphoethanolamine + (9Z,12Z)-octadecadienoate + H(+). The enzyme catalyses 1-acyl-2-(5Z,8Z,11Z,14Z)-eicosatetraenoyl-sn-glycero-3-phosphoethanolamine + H2O = a 1-acyl-sn-glycero-3-phosphoethanolamine + (5Z,8Z,11Z,14Z)-eicosatetraenoate + H(+). It catalyses the reaction 1-hexadecanoyl-2-(5Z,8Z,11Z,14Z-eicosatetraenoyl)-sn-glycero-3-phosphoethanolamine + H2O = 1-hexadecanoyl-sn-glycero-3-phosphoethanolamine + (5Z,8Z,11Z,14Z)-eicosatetraenoate + H(+). It carries out the reaction 1-hexadecanoyl-2-(5Z,8Z,11Z,14Z-eicosatetraenoyl)-sn-glycero-3-phosphocholine + H2O = 2-(5Z,8Z,11Z,14Z)-eicosatetraenoyl-sn-glycero-3-phosphocholine + hexadecanoate + H(+). The catalysed reaction is 1-octadecanoyl-2-(9Z-octadecenoyl)-sn-glycero-3-phosphocholine + H2O = 2-(9Z-octadecenoyl)-sn-glycero-3-phosphocholine + octadecanoate + H(+). The enzyme catalyses 1-hexadecanoyl-2-(4Z,7Z,10Z,13Z,16Z,19Z-docosahexaenoyl)-sn-glycero-3-phosphocholine + H2O = 2-(4Z,7Z,10Z,13Z,16Z,19Z-docosahexaenoyl)-sn-glycero-3-phosphocholine + hexadecanoate + H(+). It catalyses the reaction 1-O-(1Z)-hexadecenyl-2 (5Z,8Z,11Z,14Z)-eicosatetraenoyl-sn-glycero-3-phosphocholine + H2O = 1-(1Z-hexadecenyl)-sn-glycero-3-phosphocholine + (5Z,8Z,11Z,14Z)-eicosatetraenoate + H(+). It carries out the reaction 1-O-(1Z-hexadecenyl)-2-(9Z-octadecenoyl)-sn-glycero-3-phosphocholine + H2O = 1-(1Z-hexadecenyl)-sn-glycero-3-phosphocholine + (9Z)-octadecenoate + H(+). The catalysed reaction is 1-hexadecanoyl-sn-glycero-3-phosphocholine + H2O = sn-glycerol 3-phosphocholine + hexadecanoate + H(+). The enzyme catalyses 1',3'-bis-[1,2-di-(9Z,12Z-octadecadienoyl)-sn-glycero-3-phospho]-glycerol + H2O = 1'-[1,2-di-(9Z,12Z-octadecadienoyl)-sn-glycero-3-phospho]-3'-[1-(9Z,12Z-octadecadienoyl)-sn-glycero-3-phospho]-glycerol + (9Z,12Z)-octadecadienoate + H(+). It catalyses the reaction 1'-[1-acyl-2-(9-hydroxy-(10E,12Z)-octadecadienoyl)-sn-glycero-3-phospho]-3'-[1,2-diacyl-sn-glycero-3-phospho]-glycerol + H2O = 9-hydroxy-(10E,12Z)-octadecadienoate + 1'-[1,2-diacyl-sn-glycero-3-phospho],3'-[1-acyl-sn-glycero-3-phospho]-glycerol + H(+). It functions in the pathway phospholipid metabolism. With respect to regulation, calcium-independent phospholipase. Its function is as follows. Calcium-independent and membrane-bound phospholipase, that catalyzes the esterolytic cleavage of fatty acids from glycerophospholipids to yield free fatty acids and lysophospholipids, hence regulating membrane physical properties and the release of lipid second messengers and growth factors. Hydrolyzes phosphatidylethanolamine, phosphatidylcholine and probably phosphatidylinositol with a possible preference for the former. Has also a broad substrate specificity in terms of fatty acid moieties, hydrolyzing saturated and mono-unsaturated fatty acids at nearly equal rates from either the sn-1 or sn-2 position in diacyl phosphatidylcholine. However, has a weak activity toward polyunsaturated fatty acids at the sn-2 position, and thereby favors the production of 2-arachidonoyl lysophosphatidylcholine, a key branch point metabolite in eicosanoid signaling. On the other hand, can produce arachidonic acid from the sn-1 position of diacyl phospholipid and from the sn-2 position of arachidonate-containing plasmalogen substrates. Therefore, plays an important role in the mobilization of arachidonic acid in response to cellular stimuli and the generation of lipid second messengers. Can also hydrolyze lysophosphatidylcholine. In the mitochondrial compartment, catalyzes the hydrolysis and release of oxidized aliphatic chains from cardiolipin and integrates mitochondrial bioenergetics and signaling. It is essential for maintaining efficient bioenergetic mitochondrial function through tailoring mitochondrial membrane lipid metabolism and composition. The chain is Calcium-independent phospholipase A2-gamma from Rattus norvegicus (Rat).